The chain runs to 481 residues: Serine--tRNA ligase (481 aa).

Residue 284-286 (TAE) participates in L-serine binding. 315–317 (RAE) serves as a coordination point for ATP. Glu-338 contributes to the L-serine binding site. 405–408 (EISS) lines the ATP pocket. Position 440 (Ser-440) interacts with L-serine.

It belongs to the class-II aminoacyl-tRNA synthetase family. Type-1 seryl-tRNA synthetase subfamily. In terms of assembly, homodimer. The tRNA molecule binds across the dimer.

It localises to the cytoplasm. It carries out the reaction tRNA(Ser) + L-serine + ATP = L-seryl-tRNA(Ser) + AMP + diphosphate + H(+). The enzyme catalyses tRNA(Sec) + L-serine + ATP = L-seryl-tRNA(Sec) + AMP + diphosphate + H(+). It participates in aminoacyl-tRNA biosynthesis; selenocysteinyl-tRNA(Sec) biosynthesis; L-seryl-tRNA(Sec) from L-serine and tRNA(Sec): step 1/1. In terms of biological role, catalyzes the attachment of serine to tRNA(Ser). Is also able to aminoacylate tRNA(Sec) with serine, to form the misacylated tRNA L-seryl-tRNA(Sec), which will be further converted into selenocysteinyl-tRNA(Sec). This is Serine--tRNA ligase from Rhodopseudomonas palustris (strain BisB18).